The sequence spans 395 residues: Cysteine synthase 2 (395 aa).

The helical transmembrane segment at Gln6–Leu22 threads the bilayer. Position 83 is an N6-(pyridoxal phosphate)lysine (Lys83). Pyridoxal 5'-phosphate is bound by residues Gly228 to Thr232 and Ser335.

It belongs to the cysteine synthase/cystathionine beta-synthase family. Pyridoxal 5'-phosphate serves as cofactor.

The protein resides in the mitochondrion. Its subcellular location is the mitochondrion outer membrane. It carries out the reaction O-acetyl-L-serine + hydrogen sulfide = L-cysteine + acetate. Its function is as follows. Putative cysteine synthase that catalyzes the conversion of O-acetyl-L-serine (OAS) into cysteine, the last step in the cysteine biosynthesis pathway. However, in contrast to cysteine synthase cys11, this CS-like protein seems not to function in cysteine biosynthesis, at least under normal growth conditions, although the transcript is produced. This chain is Cysteine synthase 2 (cys12), found in Schizosaccharomyces pombe (strain 972 / ATCC 24843) (Fission yeast).